The primary structure comprises 264 residues: Short-chain dehydrogenase/reductase ucsE (264 aa).

The helical transmembrane segment at 13-32 threads the bilayer; the sequence is LVVVVGGTSGLGFAVAQAAV. 3 residues coordinate NADP(+): Leu-23, Ser-43, and Asp-74. A glycan (N-linked (GlcNAc...) asparagine) is linked at Asn-125. NADP(+)-binding residues include Arg-130 and Lys-139. Ser-157 functions as the Proton donor in the catalytic mechanism. Val-202 and Thr-204 together coordinate NADP(+).

Belongs to the short-chain dehydrogenases/reductases (SDR) family. NADP(+) serves as cofactor.

It is found in the membrane. It participates in mycotoxin biosynthesis. In terms of biological role, short-chain dehydrogenase/reductase; part of the gene cluster that mediates the biosynthesis of UCS1025A, a member of the pyrrolizidinone family that acts as a strong telomerase inhibitor and displays potent antibacterial and antitumor properties. These compounds share a hemiaminal-containing pyrrolizidinone core fused with a gamma-lactone, giving a furopyrrolizidine that is connected to a decalin fragment. The polyketide synthase module (PKS) of the PKS-NRPS ucsA is responsible for the synthesis of the polyketide backbone via the condensation of an acetyl-CoA starter unit with 6 malonyl-CoA units. The downstream nonribosomal peptide synthetase (NRPS) module then amidates the carboxyl end of the polyketide with a 2S,3S-methylproline derived from L-isoleucine by the 2-oxoglutarate-dependent dioxygenase ucsF which converts L-isoleucine to (4S,5S)-4-methylpyrroline-5-carboxylate that is further converted to 2S,3S-methylproline by the pyrroline-5-carboxylate reductase ucsG. Reductive release of the completed aminoacyl polyketide from the assembly line can form the 3-pyrrolin-2-one structure via an intramolecular Knoevenagel reaction. Because ucsA lacks a designated enoylreductase (ER) domain, the required activity is provided the enoyl reductase ucsL. This keto acyclic precursor is the substrate of the Diels-Alderase ucsH, that catalyzes the Diels-Alder cycloaddition. Oxidation of the 3S-methyl group to a carboxylate by the cytochrome P450 monooxygenase ucsK allows an oxa-Michael cyclization that might involve the reductase/dehydrogenase ucsI and which furnishes the furopyrrolizidine. The oxidase ucsJ likely plays a critical role in stereoselective reduction of the C5-C6 double bond to afford the required R-configured carboxylate group. Further enolization and oxidation at C5 by an unidentified enzyme affords the last intermediate that can undergo oxa-Michael cyclization to yield UCS1025A. The polypeptide is Short-chain dehydrogenase/reductase ucsE (Acremonium sp).